The primary structure comprises 130 residues: Fluoride-specific ion channel FluC (130 aa).

A run of 4 helical transmembrane segments spans residues 9–29, 39–59, 71–91, and 104–124; these read LAII…TIFL, YATF…VTLA, LLLA…ALEV, and VLYG…GSLI. 2 residues coordinate Na(+): Gly79 and Thr82.

The protein belongs to the fluoride channel Fluc/FEX (TC 1.A.43) family.

It localises to the cell inner membrane. The catalysed reaction is fluoride(in) = fluoride(out). Its activity is regulated as follows. Na(+) is not transported, but it plays an essential structural role and its presence is essential for fluoride channel function. Fluoride-specific ion channel. Important for reducing fluoride concentration in the cell, thus reducing its toxicity. The sequence is that of Fluoride-specific ion channel FluC from Synechocystis sp. (strain ATCC 27184 / PCC 6803 / Kazusa).